The sequence spans 357 residues: DNA replication and repair protein RecF (357 aa).

30-37 (GANGSGKT) contributes to the ATP binding site.

Belongs to the RecF family.

The protein localises to the cytoplasm. The RecF protein is involved in DNA metabolism; it is required for DNA replication and normal SOS inducibility. RecF binds preferentially to single-stranded, linear DNA. It also seems to bind ATP. The sequence is that of DNA replication and repair protein RecF from Salmonella schwarzengrund (strain CVM19633).